A 273-amino-acid chain; its full sequence is Dermonecrotic toxin LapSicTox-alphaIB2 (273 aa).

The active site involves His5. The Mg(2+) site is built by Glu25 and Asp27. The active-site Nucleophile is His41. 2 disulfide bridges follow: Cys45–Cys51 and Cys47–Cys190. Position 85 (Asp85) interacts with Mg(2+). N-linked (GlcNAc...) asparagine glycosylation is present at Asn250.

Belongs to the arthropod phospholipase D family. Class II subfamily. Requires Mg(2+) as cofactor. Expressed by the venom gland.

It is found in the secreted. The enzyme catalyses an N-(acyl)-sphingosylphosphocholine = an N-(acyl)-sphingosyl-1,3-cyclic phosphate + choline. It carries out the reaction an N-(acyl)-sphingosylphosphoethanolamine = an N-(acyl)-sphingosyl-1,3-cyclic phosphate + ethanolamine. The catalysed reaction is a 1-acyl-sn-glycero-3-phosphocholine = a 1-acyl-sn-glycero-2,3-cyclic phosphate + choline. It catalyses the reaction a 1-acyl-sn-glycero-3-phosphoethanolamine = a 1-acyl-sn-glycero-2,3-cyclic phosphate + ethanolamine. Its function is as follows. Dermonecrotic toxins cleave the phosphodiester linkage between the phosphate and headgroup of certain phospholipids (sphingolipid and lysolipid substrates), forming an alcohol (often choline) and a cyclic phosphate. This toxin acts on sphingomyelin (SM). It may also act on ceramide phosphoethanolamine (CPE), lysophosphatidylcholine (LPC) and lysophosphatidylethanolamine (LPE), but not on lysophosphatidylserine (LPS), and lysophosphatidylglycerol (LPG). It acts by transphosphatidylation, releasing exclusively cyclic phosphate products as second products. Induces dermonecrosis, hemolysis, increased vascular permeability, edema, inflammatory response, and platelet aggregation. This chain is Dermonecrotic toxin LapSicTox-alphaIB2, found in Loxosceles apachea (Apache recluse spider).